The following is a 431-amino-acid chain: uncharacterized protein (431 aa).

Disordered stretches follow at residues 31–55 (VPAS…QAGV), 257–291 (QNGG…PKQD), and 365–431 (FQSP…HRKA). Residues 42–55 (VSASQPNGAHQAGV) show a composition bias toward polar residues. The segment covering 412–425 (VEYRRGRSLRESRE) has biased composition (basic and acidic residues).

This is an uncharacterized protein from Arabidopsis thaliana (Mouse-ear cress).